The primary structure comprises 726 residues: MASDNSQTQTRTKKPRKKRKTYSCGVCRKFKTRCDFEPLVGKCHRCNVLRLECSLTKEREEEILAAVESTSKSTLAPASLVSGQLPALAAANPVVANDAVVVAPVAATLSSRLNKLESSVGSLNSKLDLALMLLQGSNSAISNLKNLTSSKAGMGDRNATYDDDDDGDDDGHDHSDSDNFVNGIKLQEPPLKLISDIDERLFPTKAQSQQDILAKTQRPFVVARFNFLKYFNQHEQLCLDLSRDFLVKSHFWIIPGGIKEINRTYVEKHLFITSVFTIIAMGFDENNKYEKEQEQLYPLVERFLTNTLTMFEKLTDHDIEAILYCSMFNISRKSKRHRQLKFNSLVLCNFAVNSVLNIVDFHKIKERVLINEEYSALDLYHLRILNSLTACRLQYSIGSGNFTIQDDMLKEFNNLTAKFPQANFGDDIKISEINLGDIVNGIFLNFKAYFKGFSKRFRAETRGHADRNRDCLVIPELEYWLKNWDELLSKDGGGVLLFAYDFYYSMICRSFLTEFFEEEFQNDVVYFKCALKTMKRYCFSLLDGFLKLPPSLIKGAPTITLHQLVYACLTLCDFLHCFDVAERQQVLNLCTKIYWHLNTIGEKLNEATDNVGKIIKSLIDTSKRKAQVSGRLAVPRNTKRGSPSMTPGFQQSVQSSSALQGSKAGSPQSARSVNSQGSGADSLAAASFNMPDVAQFNSFEDFFQDFFDNLKPTTQSMFSTLQQQQQ.

The segment at residues 24–53 (CGVCRKFKTRCDFEPLVGKCHRCNVLRLEC) is a DNA-binding region (zn(2)-C6 fungal-type). Disordered regions lie at residues 152 to 183 (AGMG…FVNG) and 629 to 681 (SGRL…SGAD). Residues 161–170 (YDDDDDGDDD) are compositionally biased toward acidic residues. The segment covering 640 to 679 (RGSPSMTPGFQQSVQSSSALQGSKAGSPQSARSVNSQGSG) has biased composition (polar residues).

This sequence belongs to the URC2 family.

The protein localises to the nucleus. Probable transcriptional activator involved in uracil catabolism. This Lachancea kluyveri (Yeast) protein is Uracil catabolism protein 2 (URC2).